The sequence spans 493 residues: Glycerol kinase (493 aa).

T13 provides a ligand contact to ADP. Residues T13, T14, and S15 each coordinate ATP. T13 contacts sn-glycerol 3-phosphate. R17 provides a ligand contact to ADP. Sn-glycerol 3-phosphate-binding residues include R83, E84, Y135, and D244. R83, E84, Y135, D244, and Q245 together coordinate glycerol. The ADP site is built by T266 and G309. 4 residues coordinate ATP: T266, G309, Q313, and G410. ADP is bound by residues G410 and N414.

Belongs to the FGGY kinase family.

It carries out the reaction glycerol + ATP = sn-glycerol 3-phosphate + ADP + H(+). Its pathway is polyol metabolism; glycerol degradation via glycerol kinase pathway; sn-glycerol 3-phosphate from glycerol: step 1/1. Inhibited by fructose 1,6-bisphosphate (FBP). Its function is as follows. Key enzyme in the regulation of glycerol uptake and metabolism. Catalyzes the phosphorylation of glycerol to yield sn-glycerol 3-phosphate. This Shewanella pealeana (strain ATCC 700345 / ANG-SQ1) protein is Glycerol kinase.